The primary structure comprises 167 residues: Phospholipase A2 inhibitor alpha-like protein (167 aa).

The first 19 residues, 1–19 (MQLILLSSLLLLGLSLANG), serve as a signal peptide directing secretion. The 102-residue stretch at 62–163 (GSERLYVTNK…CDEDLLVVCE (102 aa)) folds into the C-type lectin domain. Intrachain disulfides connect cysteine 83-cysteine 162 and cysteine 140-cysteine 154.

The protein belongs to the alpha-type phospholipase A2 inhibitor family. As to quaternary structure, homotrimer.

The protein resides in the secreted. In terms of biological role, has no PLA2 inhibitory activity. This Elaphe climacophora (Japanese rat snake) protein is Phospholipase A2 inhibitor alpha-like protein.